A 264-amino-acid polypeptide reads, in one-letter code: Pro-opiomelanocortin (264 aa).

The signal sequence occupies residues 1–26 (MPRSCCSRSGALLLALLLQASMEVRG). Residue F87 is modified to Phenylalanine amide. 2 disordered regions span residues 88 to 204 (GRRN…DLEH) and 219 to 238 (RMEH…GGFM). The N-linked (GlcNAc...) asparagine glycan is linked to N91. Composition is skewed to basic and acidic residues over residues 99–122 (QKRE…EPRG) and 130–142 (REGK…EHFR). Position 131 is a glutamic acid 1-amide (E131). Residue S135 is modified to N-acetylserine; in Corticotropin. Position 147 is a valine amide (V147). S165 is modified (phosphoserine). A compositionally biased stretch (basic and acidic residues) spans 172–186 (EFKRELTGQRPRAGD). Residues 189 to 199 (DGPADDGAGPR) are compositionally biased toward low complexity. Positions 219–234 (RMEHFRWGSPPKDKRY) are enriched in basic and acidic residues.

It belongs to the POMC family. Post-translationally, specific enzymatic cleavages at paired basic residues yield the different active peptides. ACTH and MSH are produced by the pituitary gland.

The protein resides in the secreted. Its function is as follows. Stimulates the adrenal glands to release cortisol. Functionally, anorexigenic peptide. Increases the pigmentation of skin by increasing melanin production in melanocytes. In terms of biological role, increases the pigmentation of skin by increasing melanin production in melanocytes. Endogenous orexigenic opiate. Its function is as follows. Endogenous opiate. This is Pro-opiomelanocortin (POMC) from Macaca nemestrina (Pig-tailed macaque).